A 126-amino-acid chain; its full sequence is Small ribosomal subunit protein uS13 (126 aa).

Positions 95–126 (GMPVRGQRTRTNARTRRGRRGQAIGIKKKVKK) are disordered.

Belongs to the universal ribosomal protein uS13 family. Part of the 30S ribosomal subunit. Forms a loose heterodimer with protein S19. Forms two bridges to the 50S subunit in the 70S ribosome.

Located at the top of the head of the 30S subunit, it contacts several helices of the 16S rRNA. In the 70S ribosome it contacts the 23S rRNA (bridge B1a) and protein L5 of the 50S subunit (bridge B1b), connecting the 2 subunits; these bridges are implicated in subunit movement. Contacts the tRNAs in the A and P-sites. The polypeptide is Small ribosomal subunit protein uS13 (Chloroflexus aggregans (strain MD-66 / DSM 9485)).